A 285-amino-acid chain; its full sequence is Eukaryotic translation initiation factor 3 subunit F-2 (285 aa).

An MPN domain is found at 11-145; it reads VVLQPLVLFQ…TRLYCGVEMG (135 aa).

Belongs to the eIF-3 subunit F family. As to quaternary structure, component of the eukaryotic translation initiation factor 3 (eIF-3) complex. The eIF-3 complex interacts with pix.

It is found in the cytoplasm. Its function is as follows. Component of the eukaryotic translation initiation factor 3 (eIF-3) complex, which is involved in protein synthesis of a specialized repertoire of mRNAs and, together with other initiation factors, stimulates binding of mRNA and methionyl-tRNAi to the 40S ribosome. The eIF-3 complex specifically targets and initiates translation of a subset of mRNAs involved in cell proliferation. The polypeptide is Eukaryotic translation initiation factor 3 subunit F-2 (Drosophila ananassae (Fruit fly)).